The chain runs to 295 residues: Phosphatidylserine decarboxylase proenzyme (295 aa).

Residues aspartate 90 and serine 258 each act as charge relay system; for autoendoproteolytic cleavage activity in the active site. Serine 258 functions as the Schiff-base intermediate with substrate; via pyruvic acid; for decarboxylase activity in the catalytic mechanism. Pyruvic acid (Ser); by autocatalysis is present on serine 258.

This sequence belongs to the phosphatidylserine decarboxylase family. PSD-B subfamily. Prokaryotic type I sub-subfamily. In terms of assembly, heterodimer of a large membrane-associated beta subunit and a small pyruvoyl-containing alpha subunit. Pyruvate serves as cofactor. Is synthesized initially as an inactive proenzyme. Formation of the active enzyme involves a self-maturation process in which the active site pyruvoyl group is generated from an internal serine residue via an autocatalytic post-translational modification. Two non-identical subunits are generated from the proenzyme in this reaction, and the pyruvate is formed at the N-terminus of the alpha chain, which is derived from the carboxyl end of the proenzyme. The autoendoproteolytic cleavage occurs by a canonical serine protease mechanism, in which the side chain hydroxyl group of the serine supplies its oxygen atom to form the C-terminus of the beta chain, while the remainder of the serine residue undergoes an oxidative deamination to produce ammonia and the pyruvoyl prosthetic group on the alpha chain. During this reaction, the Ser that is part of the protease active site of the proenzyme becomes the pyruvoyl prosthetic group, which constitutes an essential element of the active site of the mature decarboxylase.

Its subcellular location is the cell membrane. The catalysed reaction is a 1,2-diacyl-sn-glycero-3-phospho-L-serine + H(+) = a 1,2-diacyl-sn-glycero-3-phosphoethanolamine + CO2. The protein operates within phospholipid metabolism; phosphatidylethanolamine biosynthesis; phosphatidylethanolamine from CDP-diacylglycerol: step 2/2. Its function is as follows. Catalyzes the formation of phosphatidylethanolamine (PtdEtn) from phosphatidylserine (PtdSer). The polypeptide is Phosphatidylserine decarboxylase proenzyme (Blochmanniella pennsylvanica (strain BPEN)).